A 338-amino-acid chain; its full sequence is N-acetyl-gamma-glutamyl-phosphate reductase (338 aa).

The active site involves C148.

Belongs to the NAGSA dehydrogenase family. Type 1 subfamily.

It is found in the cytoplasm. It catalyses the reaction N-acetyl-L-glutamate 5-semialdehyde + phosphate + NADP(+) = N-acetyl-L-glutamyl 5-phosphate + NADPH + H(+). Its pathway is amino-acid biosynthesis; L-arginine biosynthesis; N(2)-acetyl-L-ornithine from L-glutamate: step 3/4. Functionally, catalyzes the NADPH-dependent reduction of N-acetyl-5-glutamyl phosphate to yield N-acetyl-L-glutamate 5-semialdehyde. The sequence is that of N-acetyl-gamma-glutamyl-phosphate reductase from Leptospira interrogans serogroup Icterohaemorrhagiae serovar Lai (strain 56601).